The sequence spans 176 residues: Large ribosomal subunit protein uL6 (176 aa).

It belongs to the universal ribosomal protein uL6 family. In terms of assembly, part of the 50S ribosomal subunit.

In terms of biological role, this protein binds to the 23S rRNA, and is important in its secondary structure. It is located near the subunit interface in the base of the L7/L12 stalk, and near the tRNA binding site of the peptidyltransferase center. The sequence is that of Large ribosomal subunit protein uL6 from Lactobacillus helveticus (strain DPC 4571).